A 111-amino-acid polypeptide reads, in one-letter code: UPF0060 membrane protein NFA_36830 (111 aa).

The next 4 membrane-spanning stretches (helical) occupy residues 7–27, 33–53, 62–82, and 91–111; these read LVLFGLAALAEIGGAWLVWQG, GLWWIAAGVIALGAYGFVATF, VLAAYGGVFVVGSLAWGVLVD, and LLGAGICLVGVAVIMYAPRGG.

Belongs to the UPF0060 family.

Its subcellular location is the cell membrane. This chain is UPF0060 membrane protein NFA_36830, found in Nocardia farcinica (strain IFM 10152).